The chain runs to 1275 residues: Serine/threonine-protein kinase ULK4 (1275 aa).

Residues 4–280 (FILYEEIGRG…WTRLLQHSFW (277 aa)) form the Protein kinase domain. The Proton acceptor role is filled by D121. 2 disordered regions span residues 299–346 (SRNT…EFRP) and 359–393 (FLLSSRPTPRTSTAVEVSPGEDRTHCSPQKTSPLT). Over residues 336 to 346 (FRLENPTEFRP) the composition is skewed to basic and acidic residues. 2 stretches are compositionally biased toward polar residues: residues 363–373 (SRPTPRTSTAV) and 384–393 (CSPQKTSPLT). HEAT repeat units lie at residues 727 to 765 (LIQEKDFVSTIIRLLESPSTYIRAKAFLVLLYILIYNRE), 842 to 880 (LKMCLPLMPIVLHLVTSQVFRPQVVTEEFLFSYGTILSH), 926 to 964 (STVVDYILPPLVSLVQSQNVEWRLFSLRLLSETTSLLVN), 1025 to 1063 (LVEESKLIPLIFEVTLEHQESILGNTMQSVIALLNNLVA), 1151 to 1189 (NRPLTDLISLLIPLLPNEDPEIFDVSSKCLSILVQLYGG), and 1213 to 1253 (PKEQ…LAPG).

This sequence belongs to the protein kinase superfamily. Ser/Thr protein kinase family. APG1/unc-51/ULK1 subfamily.

It catalyses the reaction L-seryl-[protein] + ATP = O-phospho-L-seryl-[protein] + ADP + H(+). The enzyme catalyses L-threonyl-[protein] + ATP = O-phospho-L-threonyl-[protein] + ADP + H(+). Functionally, may be involved in the remodeling of cytoskeletal components, such as alpha-tubulin, and in this way regulates neurite branching and elongation, as well as cell motility. This chain is Serine/threonine-protein kinase ULK4 (ULK4), found in Pongo abelii (Sumatran orangutan).